The following is a 518-amino-acid chain: Major facilitator superfamily domain-containing protein 8 (518 aa).

Residues Met1–Ser20 form a disordered region. The Cytoplasmic portion of the chain corresponds to Met1–Arg40. The Dileucine internalization motif signature appears at Leu13–Leu14. The chain crosses the membrane as a helical span at residues Ile41–Trp61. The Extracellular segment spans residues Pro62–Ser74. A helical transmembrane segment spans residues Phe75–Gly95. The Cytoplasmic portion of the chain corresponds to Leu96 to Glu105. The helical transmembrane segment at Pro106–Ile126 threads the bilayer. Residues Pro127–Asn131 lie on the Extracellular side of the membrane. The chain crosses the membrane as a helical span at residues Lys132–Val152. Residues Arg153–Ser173 are Cytoplasmic-facing. The chain crosses the membrane as a helical span at residues Met174–Gly194. At Glu195–Thr211 the chain is on the extracellular side. The chain crosses the membrane as a helical span at residues Thr212–Leu232. The Cytoplasmic portion of the chain corresponds to Arg233–Gln266. A helical transmembrane segment spans residues Val267–Glu287. Over Thr288–Gln304 the chain is Extracellular. The chain crosses the membrane as a helical span at residues Ala305 to Leu325. At Gly326–Arg337 the chain is on the cytoplasmic side. The helical transmembrane segment at Ala338–Gly358 threads the bilayer. The Extracellular segment spans residues Asn359–Pro412. N-linked (GlcNAc...) asparagine glycans are attached at residues Asn371 and Asn376. Residues Val413–Cys433 form a helical membrane-spanning segment. Over Asn434–Gly451 the chain is Cytoplasmic. Residues Val452 to Ile472 traverse the membrane as a helical segment. Topologically, residues Ser473–Arg482 are extracellular. The chain crosses the membrane as a helical span at residues Trp483–Tyr503. The Cytoplasmic segment spans residues Lys504–Glu518.

It belongs to the major facilitator superfamily. Expressed at very low levels in all tissues tested.

It is found in the endosome membrane. The protein localises to the lysosome membrane. The enzyme catalyses chloride(in) = chloride(out). It carries out the reaction iodide(out) = iodide(in). It catalyses the reaction fluoride(in) = fluoride(out). With respect to regulation, inhibited by chloride channel blockers 4,4'-diisothiocyano-2,2'-stilbenedisulfonate (DIDS), niflumic acid (NFA), and 5-Nitro-2-(3-phenylpropylamino) benzoic acid (NPPB). Functionally, outward-rectifying chloride channel involved in endolysosomal chloride homeostasis, membrane fusion and function. Conducts chloride currents up to hundreds of picoamperes. Regulates lysosomal calcium content by reducing the lysosomal membrane potential, thereby activating TRPML1 channel and further release of lysosomal calcium ions. Regulates the pH in endolysosomal compartments and may contribute to progressive acidification from endosome to lysosome. Permeable to other halides such as iodide and fluoride ions. The chain is Major facilitator superfamily domain-containing protein 8 from Homo sapiens (Human).